A 208-amino-acid chain; its full sequence is Platelet-activating factor receptor (208 aa).

Over 1–16 (MEPHDSSHVDSEFRYT) the chain is Extracellular. The helical transmembrane segment at 17 to 38 (LFPIVYSIIFVLGVIANGYVLW) threads the bilayer. Topologically, residues 39 to 54 (VFARLYPSKKFNEIKI) are cytoplasmic. Residues 55–74 (FMVNLTMADMLFLITLPLWI) traverse the membrane as a helical segment. The Extracellular segment spans residues 75–91 (VYYQNGGNWIFPKFLCN). Cys-90 and Cys-173 are joined by a disulfide. The chain crosses the membrane as a helical span at residues 92-113 (LAGCLFFINTYCSVAFLGVITY). At 114 to 133 (NRFQAVTRPIKTAQANTRKR) the chain is on the cytoplasmic side. The helical transmembrane segment at 134 to 155 (GISLSLVIWVAIVGAASYFFIL) threads the bilayer. Over 156 to 184 (DSTNTVPNSAGSGNITRCFEHYEKGSVPV) the chain is Extracellular. An N-linked (GlcNAc...) asparagine glycan is attached at Asn-169. Residues 185 to 205 (LIIHIFIVFSFFLVFLIILFC) form a helical membrane-spanning segment. Residues 206–208 (NLV) lie on the Cytoplasmic side of the membrane.

It belongs to the G-protein coupled receptor 1 family. In terms of assembly, interacts with ARRB1.

The protein resides in the cell membrane. Functionally, receptor for platelet activating factor, a chemotactic phospholipid mediator that possesses potent inflammatory, smooth-muscle contractile and hypotensive activity. Seems to mediate its action via a G protein that activates a phosphatidylinositol-calcium second messenger system. The sequence is that of Platelet-activating factor receptor (PTAFR) from Macaca mulatta (Rhesus macaque).